The following is a 761-amino-acid chain: Prolyl oligopeptidase A (761 aa).

Catalysis depends on charge relay system residues Ser606, Asp690, and His726.

Belongs to the peptidase S9A family. Monomer.

The enzyme catalyses Hydrolysis of Pro-|-Xaa &gt;&gt; Ala-|-Xaa in oligopeptides.. Functionally, housekeeping prolyl oligopeptidase (POP) that behaves like a conventional POP by cleaving peptide bonds on the C-terminal side of prolyl residues within peptides that are up to approximately 30 amino acids long. This chain is Prolyl oligopeptidase A, found in Amanita bisporigera (Destroying angel).